A 375-amino-acid chain; its full sequence is ATP-sensitive inward rectifier potassium channel 15 (375 aa).

Topologically, residues 1-60 (MDAIHLGMSSAPLVKHTNGVGLKAHRPRVMSKSGHSNVRIDKVDGIYLLYLQDLWTTVID) are cytoplasmic. The chain crosses the membrane as a helical span at residues 61–87 (MKWRYKLTLFAATFVMTWFLFGVVYYA). The Extracellular portion of the chain corresponds to 88–113 (IAFIHGDLQLGESNSNHTPCIMKVDS). Residues 114-130 (LTGAFLFSLESQTTIGY) constitute an intramembrane region (helical; Pore-forming). The Selectivity filter signature appears at 127–132 (TIGYGV). Residues 131-139 (GVRSITEEC) are Extracellular-facing. The chain crosses the membrane as a helical span at residues 140–165 (PHAIFLLVAQLVITTLIEIFITGTFL). The Cytoplasmic segment spans residues 166–375 (AKIARPKKRA…RSLLLQQSNV (210 aa)).

Belongs to the inward rectifier-type potassium channel (TC 1.A.2.1) family. KCNJ15 subfamily. In terms of assembly, can form heteromultimeric channels with Kir5.1/KCNJ16. Interacts with PATJ. In terms of tissue distribution, expressed in the proximal segment of the nephron.

The protein localises to the membrane. Its subcellular location is the cell membrane. The enzyme catalyses K(+)(in) = K(+)(out). With respect to regulation, channel activity is regulated by variations of cytosolic pH; reversibly inhibited by acidic pH values. Inhibited by Ba(2+) and Cs(+) in a voltage-dependent manner. Its function is as follows. Inward rectifier potassium channels are characterized by a greater tendency to allow potassium to flow into the cell rather than out of it. Their voltage dependence is regulated by the concentration of extracellular potassium; as external potassium is raised, the voltage range of the channel opening shifts to more positive voltages. The inward rectification is mainly due to the blockage of outward current by internal magnesium. The protein is ATP-sensitive inward rectifier potassium channel 15 (Kcnj15) of Mus musculus (Mouse).